Here is a 78-residue protein sequence, read N- to C-terminus: Ubiquitin-like protein 1 (78 aa).

Belongs to the ubiquitin family.

The protein is Ubiquitin-like protein 1 (ubl1) of Schizosaccharomyces pombe (strain 972 / ATCC 24843) (Fission yeast).